The following is a 1101-amino-acid chain: MATPSKKTSTPSPQPSKRALPRDPSSEVPSKRKNSAPQLPLLQSSGPFVEGSIVRISMENFLTYDICEVSPGPHLNMIVGANGTGKSSIVCAICLGLAGKPAFMGRADKVGFFVKRGCSRGMVEIELFRASGNLVITREIDVAKNQSFWFINKKSTTQKIVEEKVAALNIQVGNLCQFLPQDKVGEFAKLSKIELLEATEKSIGPPEMHKYHCELKNLREKEKQLETSCKEKTEYLQKMVQRNERYKQDVERFYERKRHLDLIEMLEAKRPWVEYENVRQEYEEVKLVRDRVKEEVRKLKEGQIPVTCRIEEMENERHNLEARIKEKATDIKEASQKCKQKQDVIERKDKHIEELQQALIVKQNEELDRQRRIGNTRKMIEDLQNELKTTENCENLQPQIDAITNDLRRIQDEKALCEGEIIDKRRERETLEKEKKSVDDHIVRFDNLMNQKEDKLRQRFRDTYDAVLWLRNNRDKFKQRVCEPIMLTINMKDNKNAKYIENHIPSNDLRAFVFESQEDMEVFLKEVRDNKKLRVNAVIAPKSSYADKAPSRSLNELKQYGFFSYLRELFDAPDPVMSYLCCQYHIHEVPVGTEKTRERIERVIQETRLKQIYTAEEKYVVKTSFYSNKVISSNTSLKVAQFLTVTVDLEQRRHLEEQLKEIHRKLQAVDSGLIALRETSKHLEHKDNELRQKKKELLERKTKKRQLEQKISSKLGSLKLMEQDTCNLEEEERKASTKIKEINVQKAKLVTELTNLIKICTSLHIQKVDLILQNTTVISEKNKLESDYMAASSQLRLTEQHFIELDENRQRLLQKCKELMKRARQVCNLGAEQTLPQEYQTQVPTIPNGHNSSLPMVFQDLPNTLDEIDALLTEERSRASCFTGLNPTIVQEYTKREEEIEQLTEELKGKKVELDQYRENISQVKERWLNPLKELVEKINEKFSNFFSSMQCAGEVDLHTENEEDYDKYGIRIRVKFRSSTQLHELTPHHQSGGERSVSTMLYLMALQELNRCPFRVVDEINQGMDPINERRVFEMVVNTACKENTSQYFFITPKLLQNLPYSEKMTVLFVYNGPHMLEPNTWNLKAFQRRRRRITFTQPS.

A compositionally biased stretch (low complexity) spans 1 to 17 (MATPSKKTSTPSPQPSK). Positions 1–43 (MATPSKKTSTPSPQPSKRALPRDPSSEVPSKRKNSAPQLPLLQ) are disordered. Phosphoserine occurs at positions 25 and 35. 80–87 (GANGTGKS) is a binding site for ATP. The stretch at 207-445 (EMHKYHCELK…KSVDDHIVRF (239 aa)) forms a coiled coil. The interval 446–646 (DNLMNQKEDK…LKVAQFLTVT (201 aa)) is flexible hinge. Coiled-coil stretches lie at residues 647-828 (VDLE…QVCN) and 888-927 (TIVQEYTKREEEIEQLTEELKGKKVELDQYRENISQVKER).

It belongs to the SMC family. SMC5 subfamily. As to quaternary structure, forms a heterodimer with SMC6. Component of the SMC5-SMC6 complex which consists at least of SMC5, SMC6, NSMCE2, NSMCE1, NSMCE4A or EID3 and NSMCE3. Interacts with NSMCE2. Interacts with SLF2; this interaction induces an association of the SLF1-SLF2 complex with the SMC5-SMC6 complex. Interacts with RAD18; this interaction is increased in a SLF1 or SLF2-dependent manner. (Microbial infection) SMC5-SMC6 complex interacts with Hepatitis B X protein. In terms of assembly, (Microbial infection) Interacts with human herpesvirus 8 (KSHV) protein RTA/ORF50; this interaction targets the SMC5-SMC6 complex for proteasomal degradation. Sumoylated. In terms of processing, ubiquitinated. Post-translationally, (Microbial infection) SMC5-SMC6 complex is degraded by the activity of Hepatitis B X protein. Widely expressed. Strongly expressed in testis.

The protein localises to the nucleus. It is found in the chromosome. It localises to the PML body. Its subcellular location is the telomere. Functionally, core component of the SMC5-SMC6 complex, a complex involved in repair of DNA double-strand breaks by homologous recombination. The complex may promote sister chromatid homologous recombination by recruiting the SMC1-SMC3 cohesin complex to double-strand breaks. The complex is required for telomere maintenance via recombination in ALT (alternative lengthening of telomeres) cell lines and mediates sumoylation of shelterin complex (telosome) components which is proposed to lead to shelterin complex disassembly in ALT-associated PML bodies (APBs). Required for recruitment of telomeres to PML nuclear bodies. Required for sister chromatid cohesion during prometaphase and mitotic progression; the function seems to be independent of SMC6. SMC5-SMC6 complex may prevent transcription of episomal DNA, such as circular viral DNA genome. In Homo sapiens (Human), this protein is Structural maintenance of chromosomes protein 5 (SMC5).